Reading from the N-terminus, the 304-residue chain is Sulfotransferase 1C3 (304 aa).

56–61 provides a ligand contact to 3'-phosphoadenylyl sulfate; sequence KSGTTW. 115-117 contributes to the substrate binding site; sequence KTH. H117 acts as the Proton acceptor in catalysis. 3'-phosphoadenylyl sulfate is bound by residues R139, S147, Y202, 236–241, and 264–268; these read TSFDVM and FMRKG.

This sequence belongs to the sulfotransferase 1 family. As to expression, not detectable in any of the tissues tested. Expressed in the small intestine.

Its subcellular location is the cytoplasm. It catalyses the reaction an alcohol + 3'-phosphoadenylyl sulfate = an alkyl sulfate + adenosine 3',5'-bisphosphate + H(+). The catalysed reaction is a phenol + 3'-phosphoadenylyl sulfate = an aryl sulfate + adenosine 3',5'-bisphosphate + H(+). It carries out the reaction lithocholate + 3'-phosphoadenylyl sulfate = lithocholate sulfate + adenosine 3',5'-bisphosphate + H(+). Sulfotransferase that utilizes 3'-phospho-5'-adenylyl sulfate (PAPS) as sulfonate donor. Has sulfotransferase activity towards various substrates, such as bile acids, thyroid hormones and toward xenobiotic compounds such as chloro phenols and hydroxypyrenes. Lithocholic acid appears to be the best substrate among the endogenous compounds tested and 3,3',5,5'-tetrachloro-4,4'-biphenyldiol shows the highest specific activity among the xenobiotic compounds. In terms of biological role, exhibits weak sulphating activity and only toward chloro phenols (pentachlorophenol and 3,3',5,5'-tetrachloro-4,4'-biphenyldiol). This Homo sapiens (Human) protein is Sulfotransferase 1C3 (SULT1C3).